The chain runs to 200 residues: GTP cyclohydrolase-2 (200 aa).

49-53 provides a ligand contact to GTP; that stretch reads RVHSE. Zn(2+) contacts are provided by Cys-54, Cys-65, and Cys-67. GTP is bound by residues Gln-70, 92 to 94, and Thr-114; that span reads EGR. The Proton acceptor role is filled by Asp-126. The Nucleophile role is filled by Arg-128. Residues Thr-149 and Lys-154 each coordinate GTP.

Belongs to the GTP cyclohydrolase II family. As to quaternary structure, homodimer. Zn(2+) is required as a cofactor.

The catalysed reaction is GTP + 4 H2O = 2,5-diamino-6-hydroxy-4-(5-phosphoribosylamino)-pyrimidine + formate + 2 phosphate + 3 H(+). It participates in cofactor biosynthesis; riboflavin biosynthesis; 5-amino-6-(D-ribitylamino)uracil from GTP: step 1/4. Catalyzes the conversion of GTP to 2,5-diamino-6-ribosylamino-4(3H)-pyrimidinone 5'-phosphate (DARP), formate and pyrophosphate. This Klebsiella pneumoniae (strain 342) protein is GTP cyclohydrolase-2.